The primary structure comprises 1240 residues: DNA polymerase catalytic subunit (1240 aa).

The segment covering 1–26 has biased composition (low complexity); sequence MFCAAGGPASPGGKSAARAASGFFAP. Disordered stretches follow at residues 1-65, 646-695, and 1103-1139; these read MFCA…PAQR, GLDK…RETG, and AAAP…ASKP. Residues 44–56 are compositionally biased toward polar residues; that stretch reads NFYNPHLAQTGTQ. Over residues 669–688 the composition is skewed to acidic residues; sequence NGDEDKDDDEDGDEDGDERE.

The protein belongs to the DNA polymerase type-B family. In terms of assembly, forms a complex with the ssDNA-binding protein UL29, the DNA polymerase processivity factor, and the alkaline exonuclease. Interacts with the putative helicase-primase complex subunit UL8; this interaction may coordinate leading and lagging strand DNA synthesis at the replication fork.

The protein resides in the host nucleus. It catalyses the reaction DNA(n) + a 2'-deoxyribonucleoside 5'-triphosphate = DNA(n+1) + diphosphate. The catalysed reaction is Endonucleolytic cleavage to 5'-phosphomonoester.. Replicates viral genomic DNA. The replication complex is composed of six viral proteins: the DNA polymerase, processivity factor, primase, primase-associated factor, helicase, and ssDNA-binding protein. Additionally, the polymerase contains an intrinsic ribonuclease H (RNase H) activity that specifically degrades RNA/DNA heteroduplexes or duplex DNA substrates in the 5' to 3' direction. Therefore, it can catalyze the excision of the RNA primers that initiate the synthesis of Okazaki fragments at a replication fork during viral DNA replication. This is DNA polymerase catalytic subunit from Human herpesvirus 2 (strain 186) (HHV-2).